Reading from the N-terminus, the 192-residue chain is Protein FAM169BP (192 aa).

Positions 121-192 are disordered; it reads YQAHPGNSED…PPGKLTRSSP (72 aa). Positions 159–177 are enriched in acidic residues; sequence EELEDTKDDPECGVEEEDA.

It belongs to the FAM169 family.

This is Protein FAM169BP from Homo sapiens (Human).